The following is a 224-amino-acid chain: Ribose-5-phosphate isomerase A (224 aa).

Substrate contacts are provided by residues 26–29, 81–84, and 94–97; these read TGST, DGAD, and KGGG. The active-site Proton acceptor is Glu-103. Lys-121 provides a ligand contact to substrate.

The protein belongs to the ribose 5-phosphate isomerase family. In terms of assembly, homodimer.

It carries out the reaction aldehydo-D-ribose 5-phosphate = D-ribulose 5-phosphate. It participates in carbohydrate degradation; pentose phosphate pathway; D-ribose 5-phosphate from D-ribulose 5-phosphate (non-oxidative stage): step 1/1. Functionally, catalyzes the reversible conversion of ribose-5-phosphate to ribulose 5-phosphate. This Listeria monocytogenes serotype 4b (strain CLIP80459) protein is Ribose-5-phosphate isomerase A.